The following is a 118-amino-acid chain: Large ribosomal subunit protein bL20 (118 aa).

Belongs to the bacterial ribosomal protein bL20 family.

Functionally, binds directly to 23S ribosomal RNA and is necessary for the in vitro assembly process of the 50S ribosomal subunit. It is not involved in the protein synthesizing functions of that subunit. This is Large ribosomal subunit protein bL20 from Hydrogenovibrio crunogenus (strain DSM 25203 / XCL-2) (Thiomicrospira crunogena).